The following is a 415-amino-acid chain: Lysosome-associated membrane glycoprotein 2 (415 aa).

Positions Met-1–Ala-25 are cleaved as a signal peptide. Positions Leu-26–Asp-188 are first lumenal domain. Topologically, residues Leu-26–Asn-379 are lumenal. Residues Asn-29, Asn-45, Asn-54, Asn-57, Asn-97, Asn-115, and Asn-175 are each glycosylated (N-linked (GlcNAc...) asparagine). The cysteines at positions 37 and 75 are disulfide-linked. The cysteines at positions 149 and 185 are disulfide-linked. The tract at residues Gln-189–Gly-233 is hinge. The span at Ala-202–Ser-213 shows a compositional bias: low complexity. The tract at residues Ala-202–Asn-227 is disordered. Asn-227, Asn-234, Asn-247, Asn-265, Asn-280, Asn-312, Asn-317, Asn-322, and Asn-361 each carry an N-linked (GlcNAc...) asparagine glycan. A second lumenal domain region spans residues Asn-234–Asn-379. Cysteines 237 and 270 form a disulfide. A disulfide bridge links Cys-336 with Cys-373. Residues Phe-380 to Gly-404 form a helical membrane-spanning segment. Residues Leu-405–Phe-415 lie on the Cytoplasmic side of the membrane. The interval Lys-406–His-409 is important for binding and subsequent lysosomal degradation of target proteins.

It belongs to the LAMP family. As to quaternary structure, monomer. Forms large homooligomers. Interacts (via its cytoplasmic region) with HSPA8; HSPA8 mediates recruitment of proteins with a KFERQ motif to the surface of the lysosome for chaperone-mediated autophagy. Interacts with HSP90 in the lysosome lumen; this enhances LAMP2 stability. Interacts with MLLT11. Interacts with ABCB9. Interacts with FURIN. Interacts with CT55; this interaction may be important for LAMP2 protein stability. Interacts with TMEM175; inhibiting the proton channel activity of TMEM175. Forms a ternary complex with RAB7A and RUFY4 (via RUN domain); the interaction with RAB7A is mediated by RUFY4 (via RUN and coiled coil domains). In terms of processing, extensively N-glycosylated. Contains a minor proportion of O-linked glycans. In terms of tissue distribution, detected in liver and kidney (at protein level). Detected in liver and kidney.

It localises to the lysosome membrane. It is found in the endosome membrane. The protein localises to the cytoplasmic vesicle. Its subcellular location is the autophagosome membrane. The protein resides in the cell membrane. Lysosomal membrane glycoprotein which plays an important role in lysosome biogenesis, lysosomal pH regulation and autophagy. Acts as an important regulator of lysosomal lumen pH regulation by acting as a direct inhibitor of the proton channel TMEM175, facilitating lysosomal acidification for optimal hydrolase activity. Plays an important role in chaperone-mediated autophagy, a process that mediates lysosomal degradation of proteins in response to various stresses and as part of the normal turnover of proteins with a long biological half-live. Functions by binding target proteins, such as GAPDH, NLRP3 and MLLT11, and targeting them for lysosomal degradation. In the chaperone-mediated autophagy, acts downstream of chaperones, such as HSPA8/HSC70, which recognize and bind substrate proteins and mediate their recruitment to lysosomes, where target proteins bind LAMP2. Plays a role in lysosomal protein degradation in response to starvation. Required for the fusion of autophagosomes with lysosomes during autophagy. Cells that lack LAMP2 express normal levels of VAMP8, but fail to accumulate STX17 on autophagosomes, which is the most likely explanation for the lack of fusion between autophagosomes and lysosomes. Required for normal degradation of the contents of autophagosomes. Required for efficient MHC class II-mediated presentation of exogenous antigens via its function in lysosomal protein degradation; antigenic peptides generated by proteases in the endosomal/lysosomal compartment are captured by nascent MHC II subunits. Is not required for efficient MHC class II-mediated presentation of endogenous antigens. This chain is Lysosome-associated membrane glycoprotein 2 (Lamp2), found in Mus musculus (Mouse).